The sequence spans 261 residues: Methyltransferase nsrG (261 aa).

The tract at residues 49–141 (DVGAGNGPYA…AHQLRPGALF (93 aa)) is methyltransferase domain.

This sequence belongs to the methyltransferase superfamily.

It functions in the pathway secondary metabolite biosynthesis. In terms of biological role, methyltransferase; part of the gene cluster that mediates the biosynthesis of the tetrahydroxanthone dimer neosartorin, which exhibits antibacterial activity. The two different monomeric units appear to be synthesized by the same set of enzymes, among which the Baeyer-Villiger monooxygenase nsrF is the key enzyme for the divergence of the biosynthetic routes. The pathway begins with the synthesis of atrochrysone thioester by the polyketide synthase nsrB. The atrochrysone carboxyl ACP thioesterase nsrC then breaks the thioester bond and releases the atrochrysone carboxylic acid from AacuL. Atrochrysone carboxylic acid is decarboxylated by the decarboxylase nsrE, and oxidized by the anthrone oxygenase nsrD to yield emodin. Emodin is then reduced to emodin hydroquinone by the oxidoreductase nsrR. A-ring reduction by the short chain dehydrogenase nsrJ, dehydration by the scytalone dehydratase-like protein nsrI and probable spontaneous re-oxidation, results in overall deoxygenation to chrysophanol. The Baeyer-Villiger monooxygenase nsrF accepts chrysophanol as a substrate to insert one oxygen atom at two different positions to yield the precursors of both monomric units. NsrF is promiscuous/flexible in interacting with the 2 (non methylated and methylated) aromatic rings of chrysophanol, thus diverging the biosynthetic pathway at this point. After the hydrolysis of the lactones, methylesterification by the methyltransferase nsrG yields respectively moniliphenone and 2,2',6'-trihydroxy-4-methyl-6-methoxya-cyldiphenylmethanone. The next steps are the hydroxylation by the FAD-dependent monooxygenase nsrK, followed by isomerization by the monooxygenase nsrQ. The short chain dehydrogenase/reductase nsrO then catalyzes the C-5 ketoreduction to give the xanthone skeleton of blennolide C and 5-acetylblennolide A. The acetyltransferase nsrL has a strict substrate specificity and uses only blennolide A but not blennolide C to yield 5-acetylblennolide A as the single-acetylated product. In the final step of the biosynthesis, the heterodimerization of the 2 xanthones, blennolide C and 5-acetylblennolide A, is catalyzed by the cytochrome P450 monooxygenase nsrP. NsrP can utilize at least three different xanthones as its substrates to perform the dimerization reaction. This Aspergillus novofumigatus (strain IBT 16806) protein is Methyltransferase nsrG.